A 342-amino-acid chain; its full sequence is Biotin synthase (342 aa).

Positions 63–288 (PEVEVEGIIS…RTMLRFAGGR (226 aa)) constitute a Radical SAM core domain. [4Fe-4S] cluster contacts are provided by cysteine 78, cysteine 82, and cysteine 85. [2Fe-2S] cluster contacts are provided by cysteine 121, cysteine 154, cysteine 213, and arginine 283.

It belongs to the radical SAM superfamily. Biotin synthase family. In terms of assembly, homodimer. [4Fe-4S] cluster serves as cofactor. It depends on [2Fe-2S] cluster as a cofactor.

The catalysed reaction is (4R,5S)-dethiobiotin + (sulfur carrier)-SH + 2 reduced [2Fe-2S]-[ferredoxin] + 2 S-adenosyl-L-methionine = (sulfur carrier)-H + biotin + 2 5'-deoxyadenosine + 2 L-methionine + 2 oxidized [2Fe-2S]-[ferredoxin]. It functions in the pathway cofactor biosynthesis; biotin biosynthesis; biotin from 7,8-diaminononanoate: step 2/2. In terms of biological role, catalyzes the conversion of dethiobiotin (DTB) to biotin by the insertion of a sulfur atom into dethiobiotin via a radical-based mechanism. The chain is Biotin synthase from Mycobacteroides abscessus (strain ATCC 19977 / DSM 44196 / CCUG 20993 / CIP 104536 / JCM 13569 / NCTC 13031 / TMC 1543 / L948) (Mycobacterium abscessus).